The primary structure comprises 426 residues: Serine hydroxymethyltransferase (426 aa).

Residues Leu111 and 115 to 117 (GHL) contribute to the (6S)-5,6,7,8-tetrahydrofolate site. The residue at position 220 (Lys220) is an N6-(pyridoxal phosphate)lysine.

The protein belongs to the SHMT family. In terms of assembly, homodimer. It depends on pyridoxal 5'-phosphate as a cofactor.

It localises to the cytoplasm. The catalysed reaction is (6R)-5,10-methylene-5,6,7,8-tetrahydrofolate + glycine + H2O = (6S)-5,6,7,8-tetrahydrofolate + L-serine. It functions in the pathway one-carbon metabolism; tetrahydrofolate interconversion. Its pathway is amino-acid biosynthesis; glycine biosynthesis; glycine from L-serine: step 1/1. Its function is as follows. Catalyzes the reversible interconversion of serine and glycine with tetrahydrofolate (THF) serving as the one-carbon carrier. This reaction serves as the major source of one-carbon groups required for the biosynthesis of purines, thymidylate, methionine, and other important biomolecules. Also exhibits THF-independent aldolase activity toward beta-hydroxyamino acids, producing glycine and aldehydes, via a retro-aldol mechanism. This chain is Serine hydroxymethyltransferase, found in Orientia tsutsugamushi (strain Ikeda) (Rickettsia tsutsugamushi).